Here is an 871-residue protein sequence, read N- to C-terminus: Translation initiation factor IF-2 (871 aa).

Disordered regions lie at residues 60–101 (KKNI…QEVK) and 184–203 (ESLK…KKES). Over residues 61-72 (KNIKTPTAKKPK) the composition is skewed to basic residues. Positions 73–101 (KENIKEQEKLNESEKKEPKKEEKLKQEVK) are enriched in basic and acidic residues. The tr-type G domain occupies 370–537 (TRAPVITIMG…IVLLQADILE (168 aa)). Residues 379–386 (GHVDHGKT) form a G1 region. 379–386 (GHVDHGKT) is a binding site for GTP. Residues 404-408 (GITQH) form a G2 region. The G3 stretch occupies residues 425–428 (DTPG). GTP-binding positions include 425–429 (DTPGH) and 479–482 (NKMD). Residues 479–482 (NKMD) form a G4 region. The interval 515–517 (SAK) is G5.

The protein belongs to the TRAFAC class translation factor GTPase superfamily. Classic translation factor GTPase family. IF-2 subfamily.

The protein resides in the cytoplasm. Functionally, one of the essential components for the initiation of protein synthesis. Protects formylmethionyl-tRNA from spontaneous hydrolysis and promotes its binding to the 30S ribosomal subunits. Also involved in the hydrolysis of GTP during the formation of the 70S ribosomal complex. The chain is Translation initiation factor IF-2 from Campylobacter jejuni subsp. jejuni serotype O:23/36 (strain 81-176).